The primary structure comprises 289 residues: YLVNPAAYAALGAYMFLLILIGFPINFLTLYVTLEHKKLRTPLNYILLNLAVGNLFMVLGGFTTTMYTSMHGYFVLGRLGCNLEGFFATLGGEIALWSLVVLAIERWIVVCKPISKFRFTEDHAIMGLAFSWVMGLACAVPPLVGWSRYIPEGMKCSCGVDYYTRAEGFNNESFVIYMFIVHFLIPLSVIFFCYGRLLCAVKEAAAAQQESETTQRAEKEVSRMVVIMVIGFLVCWLPYASVAWWIFCNQGSDFGPIFMTLPSFFAKRPAIYNPMIYICMNKQFRHCMI.

Residues Tyr1 to Ala7 lie on the Extracellular side of the membrane. A helical transmembrane segment spans residues Tyr8–Val32. Over Thr33–Asn44 the chain is Cytoplasmic. The helical transmembrane segment at Tyr45–Tyr67 threads the bilayer. At Thr68–Cys81 the chain is on the extracellular side. The cysteines at positions 81 and 158 are disulfide-linked. Residues Asn82–Ile104 traverse the membrane as a helical segment. The short motif at Glu105 to Trp107 is the 'Ionic lock' involved in activated form stabilization element. Over Glu105–His123 the chain is Cytoplasmic. A helical membrane pass occupies residues Ala124–Val144. Residues Gly145–Ser173 lie on the Extracellular side of the membrane. Asn171 is a glycosylation site (N-linked (GlcNAc...) asparagine). A helical transmembrane segment spans residues Phe174–Gly195. The Cytoplasmic portion of the chain corresponds to Arg196–Arg223. Residues Met224–Trp245 traverse the membrane as a helical segment. Over Ile246–Ile257 the chain is Extracellular. The helical transmembrane segment at Phe258–Cys279 threads the bilayer. An N6-(retinylidene)lysine modification is found at Lys267. Residues Met280 to Ile289 are Cytoplasmic-facing.

This sequence belongs to the G-protein coupled receptor 1 family. Opsin subfamily. Post-translationally, phosphorylated on some or all of the serine and threonine residues present in the C-terminal region. Contains one covalently linked retinal chromophore.

Its subcellular location is the membrane. It localises to the cell projection. The protein localises to the cilium. It is found in the photoreceptor outer segment. In terms of biological role, photoreceptor required for image-forming vision at low light intensity. While most salt water fish species use retinal as chromophore, most freshwater fish use 3-dehydroretinal, or a mixture of retinal and 3-dehydroretinal. Light-induced isomerization of 11-cis to all-trans retinal triggers a conformational change that activates signaling via G-proteins. Subsequent receptor phosphorylation mediates displacement of the bound G-protein alpha subunit by arrestin and terminates signaling. This chain is Rhodopsin (rho), found in Cottinella boulengeri (Short-headed sculpin).